The sequence spans 544 residues: Cytochrome P450 monooxygenase verL (544 aa).

A helical transmembrane segment spans residues 3–23 (VALFPILPIGCLLIYIIFKLW). Cys-446 is a heme binding site. The segment at 520 to 544 (QEKGIDGWKGKKESSSEENRGVSSR) is disordered.

It belongs to the cytochrome P450 family. It depends on heme as a cofactor.

The protein localises to the membrane. Its pathway is mycotoxin biosynthesis. Its function is as follows. Cytochrome P450 monooxygenase; part of the gene cluster that mediates the biosynthesis of 11'-deoxyverticillin A, one of the dimeric epipolythiodioxopiperazines (ETPs) from the verticillin family that act as mycotoxins. 11'-deoxyverticillin A is required for normal conidiation. The nonribosomal peptide synthetase verP is speculated to be responsible for condensation of amino acids to form the carbon skeleton of verticillin, whereas the cluster-specific tailoring enzymes are involved in further modifications leading to the production of 11'-deoxyverticillin A. The sequence is that of Cytochrome P450 monooxygenase verL from Clonostachys rogersoniana.